Here is a 137-residue protein sequence, read N- to C-terminus: Nucleoside diphosphate kinase (137 aa).

Residues Lys-11, Phe-59, Arg-87, Thr-93, Arg-104, and Asn-114 each contribute to the ATP site. The Pros-phosphohistidine intermediate role is filled by His-117.

It belongs to the NDK family. In terms of assembly, homotetramer. Requires Mg(2+) as cofactor.

It localises to the cytoplasm. It carries out the reaction a 2'-deoxyribonucleoside 5'-diphosphate + ATP = a 2'-deoxyribonucleoside 5'-triphosphate + ADP. The catalysed reaction is a ribonucleoside 5'-diphosphate + ATP = a ribonucleoside 5'-triphosphate + ADP. Its function is as follows. Major role in the synthesis of nucleoside triphosphates other than ATP. The ATP gamma phosphate is transferred to the NDP beta phosphate via a ping-pong mechanism, using a phosphorylated active-site intermediate. This is Nucleoside diphosphate kinase from Frankia casuarinae (strain DSM 45818 / CECT 9043 / HFP020203 / CcI3).